Here is a 560-residue protein sequence, read N- to C-terminus: Nitrite reductase (560 aa).

An N-terminal signal peptide occupies residues 1 to 26; sequence MSNVGKPILAGLIAGLSLLGLAVAQA. Residues 27–29 are N-terminal tail; it reads AAP. A Cytochrome c domain is found at 30–126; it reads EMTAEEKEAS…ARYIQHTPDI (97 aa). Heme c-binding residues include Cys47, Cys50, and His51. A disordered region spans residues 61-80; the sequence is KNLEPHWSKTEADGKKTEGG. Residues 63–78 show a composition bias toward basic and acidic residues; that stretch reads LEPHWSKTEADGKKTE. Thr97 and Met101 together coordinate heme c. The interval 127 to 560 is D1-heme domain; it reads PPEFSLQDMK…NVFNTMNDVY (434 aa). Heme d1 is bound by residues His193, Arg236, Ser237, Tyr256, Arg382, and Gln500.

Homodimer in solution. The cofactor is heme c. Requires heme as cofactor.

The protein resides in the periplasm. The enzyme catalyses nitric oxide + Fe(III)-[cytochrome c] + H2O = Fe(II)-[cytochrome c] + nitrite + 2 H(+). It carries out the reaction A + NH4(+) + H2O = hydroxylamine + AH2 + H(+). This is Nitrite reductase (nirS) from Stutzerimonas stutzeri (Pseudomonas stutzeri).